The following is a 121-amino-acid chain: Small ribosomal subunit protein uS13 (121 aa).

Residues 97 to 121 are disordered; sequence VRGQRTRTNARTRRGARKTVAGRKK. A compositionally biased stretch (basic residues) spans 100–121; the sequence is QRTRTNARTRRGARKTVAGRKK.

Belongs to the universal ribosomal protein uS13 family. Part of the 30S ribosomal subunit. Forms a loose heterodimer with protein S19. Forms two bridges to the 50S subunit in the 70S ribosome.

In terms of biological role, located at the top of the head of the 30S subunit, it contacts several helices of the 16S rRNA. In the 70S ribosome it contacts the 23S rRNA (bridge B1a) and protein L5 of the 50S subunit (bridge B1b), connecting the 2 subunits; these bridges are implicated in subunit movement. Contacts the tRNAs in the A and P-sites. This is Small ribosomal subunit protein uS13 from Prochlorococcus marinus (strain NATL1A).